Here is a 250-residue protein sequence, read N- to C-terminus: 5-oxoprolinase subunit A (250 aa).

Belongs to the LamB/PxpA family. Forms a complex composed of PxpA, PxpB and PxpC.

The catalysed reaction is 5-oxo-L-proline + ATP + 2 H2O = L-glutamate + ADP + phosphate + H(+). Its function is as follows. Catalyzes the cleavage of 5-oxoproline to form L-glutamate coupled to the hydrolysis of ATP to ADP and inorganic phosphate. This is 5-oxoprolinase subunit A from Paraburkholderia xenovorans (strain LB400).